The primary structure comprises 228 residues: Triosephosphate isomerase (228 aa).

12–14 (NFK) serves as a coordination point for substrate. The Electrophile role is filled by H96. E144 functions as the Proton acceptor in the catalytic mechanism. Substrate-binding positions include I149, G184, and 205 to 206 (AS).

The protein belongs to the triosephosphate isomerase family. In terms of assembly, homotetramer; dimer of dimers.

Its subcellular location is the cytoplasm. It carries out the reaction D-glyceraldehyde 3-phosphate = dihydroxyacetone phosphate. The protein operates within carbohydrate biosynthesis; gluconeogenesis. It functions in the pathway carbohydrate degradation; glycolysis; D-glyceraldehyde 3-phosphate from glycerone phosphate: step 1/1. Involved in the gluconeogenesis. Catalyzes stereospecifically the conversion of dihydroxyacetone phosphate (DHAP) to D-glyceraldehyde-3-phosphate (G3P). In Pyrococcus furiosus (strain ATCC 43587 / DSM 3638 / JCM 8422 / Vc1), this protein is Triosephosphate isomerase.